Consider the following 50-residue polypeptide: uncharacterized protein (50 aa).

The chain crosses the membrane as a helical span at residues 10-29; the sequence is LFFYYPFFIIFLYIYLVFFI.

Its subcellular location is the plastid. It is found in the chloroplast membrane. This is an uncharacterized protein from Marchantia polymorpha (Common liverwort).